A 425-amino-acid polypeptide reads, in one-letter code: UPF0597 protein Swoo_4889 (425 aa).

Belongs to the UPF0597 family.

The polypeptide is UPF0597 protein Swoo_4889 (Shewanella woodyi (strain ATCC 51908 / MS32)).